The following is a 284-amino-acid chain: Diaminopimelate epimerase (284 aa).

The substrate site is built by asparagine 14 and asparagine 67. The active-site Proton donor is the cysteine 76. Substrate-binding positions include glycine 77–asparagine 78, asparagine 166, asparagine 199, and glutamate 217–arginine 218. Residue cysteine 226 is the Proton acceptor of the active site. Residue glycine 227–threonine 228 participates in substrate binding.

Belongs to the diaminopimelate epimerase family. Homodimer.

It is found in the cytoplasm. The catalysed reaction is (2S,6S)-2,6-diaminopimelate = meso-2,6-diaminopimelate. It participates in amino-acid biosynthesis; L-lysine biosynthesis via DAP pathway; DL-2,6-diaminopimelate from LL-2,6-diaminopimelate: step 1/1. Its function is as follows. Catalyzes the stereoinversion of LL-2,6-diaminopimelate (L,L-DAP) to meso-diaminopimelate (meso-DAP), a precursor of L-lysine and an essential component of the bacterial peptidoglycan. This Geobacillus sp. (strain WCH70) protein is Diaminopimelate epimerase.